Reading from the N-terminus, the 407-residue chain is Serine/threonine transporter SstT (407 aa).

9 consecutive transmembrane segments (helical) span residues 12 to 32, 42 to 62, 81 to 101, 141 to 161, 179 to 199, 218 to 238, 245 to 267, 288 to 308, and 330 to 350; these read GNLI…GISS, LGIL…FILI, IIIL…LANF, ALSS…GIAL, VLKI…GLVA, ILLV…IVFF, FPLI…SSAA, ISIP…IAIL, and IIAT…LLLI.

Belongs to the dicarboxylate/amino acid:cation symporter (DAACS) (TC 2.A.23) family.

It localises to the cell inner membrane. It catalyses the reaction L-serine(in) + Na(+)(in) = L-serine(out) + Na(+)(out). The catalysed reaction is L-threonine(in) + Na(+)(in) = L-threonine(out) + Na(+)(out). Involved in the import of serine and threonine into the cell, with the concomitant import of sodium (symport system). The protein is Serine/threonine transporter SstT of Campylobacter jejuni subsp. jejuni serotype O:23/36 (strain 81-176).